A 259-amino-acid chain; its full sequence is Type III pantothenate kinase (259 aa).

Residue 6–13 (DVGNTNCT) coordinates ATP. 107–110 (GSDR) provides a ligand contact to substrate. Catalysis depends on Asp109, which acts as the Proton acceptor. Position 129 (Asp129) interacts with K(+). Thr132 lines the ATP pocket. Residue Thr184 participates in substrate binding.

Belongs to the type III pantothenate kinase family. As to quaternary structure, homodimer. NH4(+) serves as cofactor. The cofactor is K(+).

The protein localises to the cytoplasm. The enzyme catalyses (R)-pantothenate + ATP = (R)-4'-phosphopantothenate + ADP + H(+). The protein operates within cofactor biosynthesis; coenzyme A biosynthesis; CoA from (R)-pantothenate: step 1/5. In terms of biological role, catalyzes the phosphorylation of pantothenate (Pan), the first step in CoA biosynthesis. In Listeria welshimeri serovar 6b (strain ATCC 35897 / DSM 20650 / CCUG 15529 / CIP 8149 / NCTC 11857 / SLCC 5334 / V8), this protein is Type III pantothenate kinase.